The chain runs to 388 residues: Cuticle-degrading protease (388 aa).

The signal sequence occupies residues 1–18 (MHLSALLTLLPAVLAAPA). A propeptide spanning residues 19–107 (TIGRRAEPAP…IEKDAVMRIS (89 aa)) is cleaved from the precursor. Positions 41–106 (KYIVKFKDDI…FIEKDAVMRI (66 aa)) constitute an Inhibitor I9 domain. The 273-residue stretch at 116-388 (PWGLGRISHR…TVNYLAYNGA (273 aa)) folds into the Peptidase S8 domain. Intrachain disulfides connect C143/C233 and C288/C360. Catalysis depends on charge relay system residues D148 and H179. N-linked (GlcNAc...) asparagine glycosylation is present at N296. S334 (charge relay system) is an active-site residue.

Belongs to the peptidase S8 family.

It localises to the secreted. Functionally, capable of breaching the insect cuticle. The chain is Cuticle-degrading protease (PR1) from Metarhizium anisopliae (Entomophthora anisopliae).